A 249-amino-acid polypeptide reads, in one-letter code: 2,3-bisphosphoglycerate-dependent phosphoglycerate mutase (249 aa).

Residues 8-15 (RHGESVWN), 21-22 (TG), R60, 87-90 (ERHY), K98, 114-115 (RR), and 183-184 (GN) each bind substrate. H9 acts as the Tele-phosphohistidine intermediate in catalysis. E87 functions as the Proton donor/acceptor in the catalytic mechanism.

This sequence belongs to the phosphoglycerate mutase family. BPG-dependent PGAM subfamily.

The enzyme catalyses (2R)-2-phosphoglycerate = (2R)-3-phosphoglycerate. It participates in carbohydrate degradation; glycolysis; pyruvate from D-glyceraldehyde 3-phosphate: step 3/5. Catalyzes the interconversion of 2-phosphoglycerate and 3-phosphoglycerate. This Chloroherpeton thalassium (strain ATCC 35110 / GB-78) protein is 2,3-bisphosphoglycerate-dependent phosphoglycerate mutase.